Reading from the N-terminus, the 228-residue chain is 2-C-methyl-D-erythritol 4-phosphate cytidylyltransferase (228 aa).

It belongs to the IspD/TarI cytidylyltransferase family. IspD subfamily.

It catalyses the reaction 2-C-methyl-D-erythritol 4-phosphate + CTP + H(+) = 4-CDP-2-C-methyl-D-erythritol + diphosphate. The protein operates within isoprenoid biosynthesis; isopentenyl diphosphate biosynthesis via DXP pathway; isopentenyl diphosphate from 1-deoxy-D-xylulose 5-phosphate: step 2/6. In terms of biological role, catalyzes the formation of 4-diphosphocytidyl-2-C-methyl-D-erythritol from CTP and 2-C-methyl-D-erythritol 4-phosphate (MEP). This chain is 2-C-methyl-D-erythritol 4-phosphate cytidylyltransferase, found in Geobacillus thermodenitrificans (strain NG80-2).